The following is a 596-amino-acid chain: MNNIRNFSIIAHIDHGKSTLADRIISECGAVDSRVMSAQVMDTMDIEKERGITIKAQSVRLTYKLEGQIYILNLIDTPGHVDFSYEVSRSLASCEGALLVVDASQGVEAQTIANVYIALENNLEIIPVINKIDLPAAEPQRVKNEIEHIIGLDCSEAIEVSAKTGVGIKELIETIIRKIPPPKPGENNPFKSLIYDSWFDNYLGALALVRVYDGAVKKGDEVYVMGTDKKHTVLDLMYPNPIAPIKTNELKTGEVGIIVLGLKNVSDVSVGDTITLAKNRALEAIGGFEKAKPFVFAGLYPIDTDKFEDLRDALDKLKLNDSSISYEPETSAALGFGFRVGFLGLLHMEVVKERLEREFGLDLIATAPTVTYEVVQTDGVSVEIQNPSELPPVNKIEFIKEPYVKATIITPSEFLGNIITLLNNRRAVQTKMDYITTTRVLLEYDIPMNEIVMDFYDKLKSATKGYASFDYEPSDYRVGDLVKLDIKVAGEAVDALSIIVPEEKAMSKGRDFVKTMKELVPRQLFEVAIQASIGNKVIARETVKSMGKNVTAKCYGGDITRKRKLLEKQKEGKKRMKAIGKVTLPQEAFLSVLKID.

One can recognise a tr-type G domain in the interval 2–183 (NNIRNFSIIA…TIIRKIPPPK (182 aa)). GTP contacts are provided by residues 14-19 (DHGKST) and 130-133 (NKID).

This sequence belongs to the TRAFAC class translation factor GTPase superfamily. Classic translation factor GTPase family. LepA subfamily.

It localises to the cell inner membrane. The catalysed reaction is GTP + H2O = GDP + phosphate + H(+). Required for accurate and efficient protein synthesis under certain stress conditions. May act as a fidelity factor of the translation reaction, by catalyzing a one-codon backward translocation of tRNAs on improperly translocated ribosomes. Back-translocation proceeds from a post-translocation (POST) complex to a pre-translocation (PRE) complex, thus giving elongation factor G a second chance to translocate the tRNAs correctly. Binds to ribosomes in a GTP-dependent manner. This Campylobacter fetus subsp. fetus (strain 82-40) protein is Elongation factor 4.